Here is a 721-residue protein sequence, read N- to C-terminus: Quinolinate synthase, chloroplastic (721 aa).

Residues 1-67 (MDAANLVMKS…KIPSNNSTFT (67 aa)) constitute a chloroplast transit peptide. The active-site Cysteine persulfide intermediate is cysteine 133. Iminosuccinate-binding residues include histidine 283 and serine 309. Residue cysteine 363 coordinates [4Fe-4S] cluster. Iminosuccinate-binding positions include 392–394 (YIN) and serine 414. A [4Fe-4S] cluster-binding site is contributed by cysteine 487. Iminosuccinate is bound by residues 513–515 (HFE) and threonine 538. Cysteine 643 contributes to the [4Fe-4S] cluster binding site.

It belongs to the quinolinate synthase family. Type 1 subfamily. In terms of assembly, homodimer. [4Fe-4S] cluster is required as a cofactor.

It localises to the plastid. The protein localises to the chloroplast. The catalysed reaction is iminosuccinate + dihydroxyacetone phosphate = quinolinate + phosphate + 2 H2O + H(+). It participates in alkaloid biosynthesis; nicotine biosynthesis. It functions in the pathway cofactor biosynthesis; NAD(+) biosynthesis; quinolinate from iminoaspartate: step 1/1. Functionally, involved in the biosynthesis of pyridine alkaloid natural products, leading mainly to the production of anabasine, anatabine, nicotine and nornicotine, effective deterrents against herbivores with antiparasitic and pesticide properties (neurotoxins); nornicotine serves as the precursor in the synthesis of the carcinogen compound N'-nitrosonornicotine (NNN). Catalyzes the condensation of iminoaspartate with dihydroxyacetone phosphate to form quinolinate. The protein is Quinolinate synthase, chloroplastic of Nicotiana tabacum (Common tobacco).